The chain runs to 213 residues: MNRHRPHSHRSKPASTQDQPDSVRRYRDPRFDAIAVKVFPGEHYVTSNPDEMLVTILGSCVAACIRDPLAKVGGMNHFMLPEAGGSGWDTASDSMRYGNVAMERLINDILVRGGMRQRLEIKVFGGGNVMKSTANIGHRNADFVEEYLAAESLPIAARHLRGHLPRRVHYFPITGRVMLLELARTEQEAVVRLERDYKSKIQVEPVAGSAELF.

Residues 1-12 (MNRHRPHSHRSK) show a composition bias toward basic residues. The segment at 1 to 25 (MNRHRPHSHRSKPASTQDQPDSVRR) is disordered.

Belongs to the CheD family.

The enzyme catalyses L-glutaminyl-[protein] + H2O = L-glutamyl-[protein] + NH4(+). Probably deamidates glutamine residues to glutamate on methyl-accepting chemotaxis receptors (MCPs), playing an important role in chemotaxis. The protein is Probable chemoreceptor glutamine deamidase CheD of Rhodopseudomonas palustris (strain BisA53).